Consider the following 502-residue polypeptide: RNA polymerase sigma factor sigA (502 aa).

Residues 1–23 (MATAAVIGLNTGKRLLSSSFYHS) constitute a chloroplast transit peptide. Over residues 57 to 71 (YSPSFPSSNRHTQSA) the composition is skewed to polar residues. The disordered stretch occupies residues 57–92 (YSPSFPSSNRHTQSAKALKESVDVASTEKPWLPNGT). Position 170 is a phosphothreonine (Thr-170). The Polymerase core binding motif lies at 287–300 (DLVQGGLIGLLRGI). A DNA-binding region (H-T-H motif) is located at residues 461-480 (WEDISKRIGLSRERVRQVGL).

This sequence belongs to the sigma-70 factor family. As to quaternary structure, interacts with SIB1 in chloroplast. Binds to CSK. The phosphorylation of Thr-170 mediated by oxidative conditions of plastoquinone (PQ) changes the promoter specificity, selectively inhibiting the transcription of the psaA gene, which encodes a PS-I protein. Phosphorylation of the holoenzyme occurs in the dark. This phosphorylation in response to plastoquinone redox state modification is mediated by CSK. Highly expressed in leaves, and to a lesser extent in roots. Expressed in old seedlings (8 days), cotyledons, hypocotyls, leaves, sepals and siliques.

The protein localises to the plastid. The protein resides in the chloroplast. Essential protein. Sigma factors are initiation factors that promote the attachment of plastid-encoded RNA polymerase (PEP) to specific initiation sites and are then released. Controls the transcription of the psaA gene and thus modulates photosystem stoichiometry. Thereby maintains a harmonious electron flow and photosynthetic efficiency. This chain is RNA polymerase sigma factor sigA (SIGA), found in Arabidopsis thaliana (Mouse-ear cress).